We begin with the raw amino-acid sequence, 633 residues long: Chaperone protein dnaK2 (633 aa).

Thr-196 is subject to Phosphothreonine; by autocatalysis. The segment at 600-633 (ATADGGPAQHAATGGPTSGGGGGDDVIDAEFDKG) is disordered. Residues 624–633 (DVIDAEFDKG) show a composition bias toward acidic residues.

Belongs to the heat shock protein 70 family.

In terms of biological role, acts as a chaperone. The sequence is that of Chaperone protein dnaK2 (dnaK2) from Streptomyces avermitilis (strain ATCC 31267 / DSM 46492 / JCM 5070 / NBRC 14893 / NCIMB 12804 / NRRL 8165 / MA-4680).